A 342-amino-acid chain; its full sequence is Probable dual-specificity RNA methyltransferase RlmN (342 aa).

E91 serves as the catalytic Proton acceptor. A Radical SAM core domain is found at Y97–E327. C104 and C332 are oxidised to a cystine. Residues C111, C115, and C118 each contribute to the [4Fe-4S] cluster site. Residues G158–E159, S190, S213–H215, and N289 contribute to the S-adenosyl-L-methionine site. C332 acts as the S-methylcysteine intermediate in catalysis.

It belongs to the radical SAM superfamily. RlmN family. It depends on [4Fe-4S] cluster as a cofactor.

It localises to the cytoplasm. The enzyme catalyses adenosine(2503) in 23S rRNA + 2 reduced [2Fe-2S]-[ferredoxin] + 2 S-adenosyl-L-methionine = 2-methyladenosine(2503) in 23S rRNA + 5'-deoxyadenosine + L-methionine + 2 oxidized [2Fe-2S]-[ferredoxin] + S-adenosyl-L-homocysteine. It catalyses the reaction adenosine(37) in tRNA + 2 reduced [2Fe-2S]-[ferredoxin] + 2 S-adenosyl-L-methionine = 2-methyladenosine(37) in tRNA + 5'-deoxyadenosine + L-methionine + 2 oxidized [2Fe-2S]-[ferredoxin] + S-adenosyl-L-homocysteine. Its function is as follows. Specifically methylates position 2 of adenine 2503 in 23S rRNA and position 2 of adenine 37 in tRNAs. This is Probable dual-specificity RNA methyltransferase RlmN from Carboxydothermus hydrogenoformans (strain ATCC BAA-161 / DSM 6008 / Z-2901).